Reading from the N-terminus, the 456-residue chain is Cell cycle checkpoint control protein Rad9 (456 aa).

The Nuclear localization signal signature appears at 300–302; sequence KRK.

It belongs to the rad9 family. As to quaternary structure, component of the 9-1-1 checkpoint clamp complex consisting of Rad9 isoform A, Rad1 and Hus1-like; the interaction with Hus1-like is direct. Does not interact directly with Rad1; this interaction is probably mediated by Hus1-like. This complex probably also forms with Rad9 isoform B, however 9-1-1 complex containing Rad9 isoform A localizes to the nuclear periphery. Interacts with Brca2. In terms of tissue distribution, expressed in ovary.

The protein localises to the nucleus envelope. It localises to the nucleus. In terms of biological role, component of the Rad9-Rad1-Hus1 (9-1-1) checkpoint clamp complex. Its function is as follows. Targets the 9-1-1 complex to the nuclear periphery. Targeting to the nuclear periphery is disrupted in the presence of persistent double stranded break DNA damage, possibly as a function of the meiotic checkpoint. The chain is Cell cycle checkpoint control protein Rad9 from Drosophila melanogaster (Fruit fly).